The primary structure comprises 365 residues: Carbohydrate sulfotransferase 10 (365 aa).

The Cytoplasmic segment spans residues 1 to 6 (MRRHWL). Residues 7–27 (LVGACGWVLLILMFVSKFINF) form a helical; Signal-anchor for type II membrane protein membrane-spanning segment. At 28 to 356 (SFRIPGDYAG…RYQGDFSLFD (329 aa)) the chain is on the lumenal side. N-linked (GlcNAc...) asparagine glycans are attached at residues Asn99 and Asn104. Residues 132–138 (PKVGNTQ) and 194–202 (RDPFERLIS) contribute to the 3'-phosphoadenylyl sulfate site. An N-linked (GlcNAc...) asparagine glycan is attached at Asn325.

It belongs to the sulfotransferase 2 family.

The protein localises to the golgi apparatus membrane. In terms of biological role, catalyzes the transfer of sulfate to position 3 of terminal glucuronic acid of both protein- and lipid-linked oligosaccharides. Participates in biosynthesis of HNK-1 carbohydrate structure, a sulfated glucuronyl-lactosaminyl residue carried by many neural recognition molecules. The sequence is that of Carbohydrate sulfotransferase 10 (chst10) from Danio rerio (Zebrafish).